The following is a 734-amino-acid chain: Photosystem I P700 chlorophyll a apoprotein A2 (734 aa).

Helical transmembrane passes span 46 to 69 (IFASHFGQLAIIFLWTSGNLFHVA), 135 to 158 (LYTASVFLSLMAGVFLFAGWLHLQ), 175 to 199 (LNHHLSGLFGVSSLAWTGHLVHVAI), 273 to 291 (IAHHHLAIAVVFIIAGHQY), 330 to 353 (LHFQLGLALASVGTICSMVAQHIY), 369 to 395 (AALYTHHQYIAGFIMCGAFAHGAIFFI), 417 to 439 (AIISHLSWVSLFLGFHTLGLYVH), and 517 to 535 (FLVHHAIALGLHTTTLILV). [4Fe-4S] cluster contacts are provided by Cys559 and Cys568. 2 helical membrane-spanning segments follow: residues 575–596 (AFYLAVFWMLNTIGWVTFYFHW) and 643–665 (LGVWSWAFLLAHLIYATGFMFLI). Chlorophyll a is bound by residues His654, Met662, and Tyr670. Trp671 contributes to the phylloquinone binding site. Residues 707–727 (LVGLVHFSVGYVLTYGSFLIA) form a helical membrane-spanning segment.

It belongs to the PsaA/PsaB family. In terms of assembly, the PsaA/B heterodimer binds the P700 chlorophyll special pair and subsequent electron acceptors. PSI consists of a core antenna complex that captures photons, and an electron transfer chain that converts photonic excitation into a charge separation. The eukaryotic PSI reaction center is composed of at least 11 subunits. P700 is a chlorophyll a/chlorophyll a' dimer, A0 is one or more chlorophyll a, A1 is one or both phylloquinones and FX is a shared 4Fe-4S iron-sulfur center. serves as cofactor.

The protein localises to the plastid. It is found in the chloroplast thylakoid membrane. It catalyses the reaction reduced [plastocyanin] + hnu + oxidized [2Fe-2S]-[ferredoxin] = oxidized [plastocyanin] + reduced [2Fe-2S]-[ferredoxin]. Its function is as follows. PsaA and PsaB bind P700, the primary electron donor of photosystem I (PSI), as well as the electron acceptors A0, A1 and FX. PSI is a plastocyanin/cytochrome c6-ferredoxin oxidoreductase, converting photonic excitation into a charge separation, which transfers an electron from the donor P700 chlorophyll pair to the spectroscopically characterized acceptors A0, A1, FX, FA and FB in turn. Oxidized P700 is reduced on the lumenal side of the thylakoid membrane by plastocyanin or cytochrome c6. The polypeptide is Photosystem I P700 chlorophyll a apoprotein A2 (Oltmannsiellopsis viridis (Marine flagellate)).